The following is a 459-amino-acid chain: Elongation factor 1-alpha 1 (459 aa).

Residues 5 to 242 form the tr-type G domain; the sequence is KTHINIVVIG…DCIIPPQRPT (238 aa). Positions 14 to 21 are G1; it reads GHVDSGKS. The tract at residues 70–74 is G2; it reads GITID. The segment at 91-94 is G3; that stretch reads DAPG. Residues 153 to 156 form a G4 region; it reads NKMD. The interval 194–196 is G5; the sequence is SGF. 2 positions are modified to 5-glutamyl glycerylphosphorylethanolamine: E301 and E374.

Belongs to the TRAFAC class translation factor GTPase superfamily. Classic translation factor GTPase family. EF-Tu/EF-1A subfamily.

Its subcellular location is the cytoplasm. Its function is as follows. This protein promotes the GTP-dependent binding of aminoacyl-tRNA to the A-site of ribosomes during protein biosynthesis. The protein is Elongation factor 1-alpha 1 (eft-1) of Oscheius tipulae.